The sequence spans 186 residues: Casparian strip membrane protein 6 (186 aa).

The Cytoplasmic portion of the chain corresponds to Met1–Gly23. The helical transmembrane segment at Val24 to Ile44 threads the bilayer. Over Ser45 to Thr73 the chain is Extracellular. Asn50 carries an N-linked (GlcNAc...) asparagine glycan. Residues Phe74 to Ile94 form a helical membrane-spanning segment. Topologically, residues Phe95–Arg106 are cytoplasmic. A helical transmembrane segment spans residues Ile107–Ala127. Over Ala128–Ser160 the chain is Extracellular. N-linked (GlcNAc...) asparagine glycosylation occurs at Asn142. A helical transmembrane segment spans residues Leu161–Ala181. Residues Leu182–Lys186 lie on the Cytoplasmic side of the membrane.

The protein belongs to the Casparian strip membrane proteins (CASP) family. In terms of assembly, homodimer and heterodimers.

It is found in the cell membrane. Its function is as follows. Regulates membrane-cell wall junctions and localized cell wall deposition. Required for establishment of the Casparian strip membrane domain (CSD) and the subsequent formation of Casparian strips, a cell wall modification of the root endodermis that determines an apoplastic barrier between the intraorganismal apoplasm and the extraorganismal apoplasm and prevents lateral diffusion. The polypeptide is Casparian strip membrane protein 6 (Populus trichocarpa (Western balsam poplar)).